Here is a 344-residue protein sequence, read N- to C-terminus: tRNA N6-adenosine threonylcarbamoyltransferase (344 aa).

Residues H111 and H115 each coordinate Fe cation. Substrate is bound by residues 134–138 (LVSGG), D167, G180, and N273. Residue D301 participates in Fe cation binding.

The protein belongs to the KAE1 / TsaD family. The cofactor is Fe(2+).

The protein localises to the cytoplasm. The enzyme catalyses L-threonylcarbamoyladenylate + adenosine(37) in tRNA = N(6)-L-threonylcarbamoyladenosine(37) in tRNA + AMP + H(+). In terms of biological role, required for the formation of a threonylcarbamoyl group on adenosine at position 37 (t(6)A37) in tRNAs that read codons beginning with adenine. Is involved in the transfer of the threonylcarbamoyl moiety of threonylcarbamoyl-AMP (TC-AMP) to the N6 group of A37, together with TsaE and TsaB. TsaD likely plays a direct catalytic role in this reaction. This chain is tRNA N6-adenosine threonylcarbamoyltransferase, found in Cupriavidus necator (strain ATCC 17699 / DSM 428 / KCTC 22496 / NCIMB 10442 / H16 / Stanier 337) (Ralstonia eutropha).